The chain runs to 2643 residues: MDGRDFAPPPHLLSERGSLGHRSAAAAARLAPAGPAAQPAAHFQPGKYFPSPLPMASHTASSRLMGNPPASSFMGSFLTSSLGSAASAHPSGPTSSPSEPAYRGSHPATSQIWFSHSHEAPAYPRFSGSLASTFLPVSHLDHHGNSNVLYGQHRFYGTQKDNFYLRNLPPQPTILPANHNFPGVPRATPAHPIGSCSRDRIEAASLQKGPKEFDRFLMGKEVGKEKVSKGAEGRERPAVEEDSGKDRQKLVPPMPAEGPCKEAGPAPRGSCEGRPKHLTSCLLNTKVLNGDMGKASLASCAGGMLGRPGTGVAAPGRCAKEVAGPVEPGPAFSECLERRQMLHHAVSYTVPSGLPTGPPPPLSTGPAGSFPCLQLHAGPDGLCPLQDKVSRDLKASGPTFVPSVGHLADKSRSFQVAEACAVAGDGKDRHLDAAMATDHGAPYGVSYAHLKAEGKGERRPGGFEAALHPRLKGLEYLSSGPEAPFPGLPKGGLDKSGYFELPTSQDCARSNHQDPLGGKATQACCTLDKVANKEAPAGPPVGQKVARIRHQQHLVAPEVESGGSGAETKRKSVELASLGYSGHHMPPWGVQTGHDTSMAIIEERKGSAYLDPFGSGLQQAALLSQELPTPPDEVSAMKNLLKYSNQALVVGQKAPFVGLGSLKASCVQQEAKFPATKGPGPVERPDCARSREHEAPHGDGEVRQPPVGIAVALARQKDTVGRPDTAYNTNSGRQGRAAPTFKGAGGPRASHALDLESEEERSRACEERLGLPGRELLLQDNKDLVEFARIHPSSSCPGDLPPHLMMQGGDPAPHPHPAHPHWLPRTRSPSLWMGGHSYGLGHPALHQNLPPGFPASVPGSMPSVFPLPQDAATQLVILPSEPTPHTTPHTLAEVMDQASLWPPMYGARGPASHMQHPGQLPVYSRSQLLRQQELYALQQQQQQQQQQQQQQQQQQQQQQQQQQQQQQQHRATQALELQRVAQFQRKPEDRHMELEEAAQEKTPKSTHKPVALTPMAKGTPSSATAGLVKLSPCCQSPTLKTPASCPTPPPRPSAPCTLPICPTGSPGPGSKVPSTMDKSEEGQRAGTNLTTLEPDLTPGLNPTAGLDLSLPSDVHSSDLQDPKTMQTTTPGTRPEPPRTFLPGEPPPCSPRNLEEPGLLSRARDATQDLANLPPPVEGGLPPGKAEDPSPLEGLQALKFGDLLEGGGTEATGQTNSTQGGMQNERTVDQGAPQPPLGATPQALEQEAGSPAALDKREGPQKVPDVAQLQEEETQLEESGGDSEVDWGTPNHSHPPKALPGLDALVAATVDLGDLPDISLTDPQTPAASVPLSTAPLPHSSGIHGIALLSELADLETQRQKSELSMQEDEDVLAFNLQHLATLATAWSLVEAANLDSPVTSLQAPAADPDRGPRLTPRMQILQRKDTWAPKTKPVCPLKAAIDRLDTQEVEMRMQLAELQRRYKEKQRELARLQRRHDHEREESSRSPARRGPGRPRKRKHSSSLPALRPGGQLARSDSKKAKAVRASLSLLCAELRGDEPPRKRSKLGKSPYTGLQSVSSEKVRCKKSCGQAELPSSVAHKVAQLKPKVKSKGLPAGLGAFQRKEAAPGGRIQKKLSRAKSVTASGAARHPHPDGDSGREMHKFQAQPAVAVAHEAGSGYDSEDCQALLGTEAAPREPGLVLHPGSGVAVLGPSPSSVVKMEANQKAKKKKERQGLLGACRLSSPEGEVKIKRRTVKTKVGAKLERAPGRRPPGAPGKKKAKGKVKTGLRTEPGTATSRDTLFSPTRTFACREEGSKLASERLKRATRKSAMLQPVLRRKNGALSIALSARNAKAILGKSRKLTKVKREAVSKQGQGRAVSRLLESFAVEDDFEFDEDDTSFSDEEEEEEEAGVQLSAEQSAALARSCTIHKEDLQDGLPVLIPKEDSLLYAGSVRTLQPPDIYSIVIEGERGNRQRIYSLEQLLQEAVLDVQPQSSRYLPPGTRVCAYWSQKSRCLYPGNVVRGASSDEEDLDSVLVEFDDGDTGHIAVSNIRLLPPDFKIQCTEPSPALLVSSSCRRTKKAANEGHPPSEAPTPSLSPKVPDGPETSKTPGKKSGSKDKAGKVDLLTSGAKSPTGASDHFLGRRGSPLLSWSAVAQTKRKAVAAAAAAAGGKGPGVLQNLFQLNGSTKKLRARDTLFPMHSMATPVFGNSFRADSFSSLASSYTPFLGGAGAGLPGGAHKLLRAKKAERAEAEKAGRRRAGGEFLVKLDHEGVTSPKNKNCKALLMSDKDFGPKLGRPLSNPSYAHPALIGKDKKGRAPVHPLPMGLALRKYPLPCDSDCPSSYSDEDEDGPGLATGVPSRFLTRLSMSSSSSGSSTSSSSGSVSTSSLCSSDNEDSSYSSDDEDPALLLQTCLTRPVPALLAPPEALRSKGSSPHAHTHAQRCFLSRAGVAGAGAGASPSGSKSKFKRKEALSFSKAKELSRRQRLPSVENRPKISAFLPARQLWKWSGNPTQRRGMKGKARKLFYKAIVRGKETLRIGDCAVFLSAGRPNLPYIGRIESLWESWGSNMVVKVKWFYHPEETKLGKRQSDGKNALYQSCHEDENDVQTISHKCQVVGREQYEQMMRGRKYQDQQDLYYLAGTYDPTTGRLVTADGVPVLC.

Disordered stretches follow at residues 23 to 45 and 84 to 106; these read SAAA…HFQP and SAAS…RGSH. An N6-acetyllysine modification is found at Lys-220. Composition is skewed to basic and acidic residues over residues 224–249 and 683–702; these read KEKV…DRQK and ERPD…DGEV. Disordered regions lie at residues 224-273, 674-704, 721-758, 985-1023, and 1038-1299; these read KEKV…SCEG, PATK…EVRQ, GRPD…LESE, RKPE…PSSA, and TLKT…KALP. The span at 985-1003 shows a compositional bias: basic and acidic residues; the sequence is RKPEDRHMELEEAAQEKTP. Positions 1133–1149 are enriched in pro residues; it reads RPEPPRTFLPGEPPPCS. A compositionally biased stretch (polar residues) spans 1210-1224; that stretch reads ATGQTNSTQGGMQNE. A compositionally biased stretch (acidic residues) spans 1269–1284; the sequence is QEEETQLEESGGDSEV. Coiled-coil stretches lie at residues 1346 to 1373 and 1437 to 1486; these read ALLS…DVLA and LKAA…SSRS. Residues 1466–1484 show a composition bias toward basic and acidic residues; it reads QRELARLQRRHDHEREESS. Disordered stretches follow at residues 1466-1520, 1537-1559, 1604-1641, 1746-1781, 1875-1896, 2055-2124, 2322-2341, and 2349-2386; these read QREL…DSKK, GDEP…QSVS, KEAA…GREM, RAPG…SRDT, FDED…GVQL, SSCR…HFLG, CPSS…TGVP, and SMSS…SDDE. Positions 1487–1501 are enriched in basic residues; that stretch reads PARRGPGRPRKRKHS. Residues 1631 to 1641 are compositionally biased toward basic and acidic residues; sequence PHPDGDSGREM. Over residues 1757 to 1767 the composition is skewed to basic residues; sequence GKKKAKGKVKT. Residues 1875–1892 show a composition bias toward acidic residues; it reads FDEDDTSFSDEEEEEEEA. Residues 2349 to 2374 are compositionally biased toward low complexity; the sequence is SMSSSSSGSSTSSSSGSVSTSSLCSS. Over residues 2375–2386 the composition is skewed to acidic residues; sequence DNEDSSYSSDDE. The BAH domain maps to 2517 to 2637; it reads ETLRIGDCAV…PTTGRLVTAD (121 aa).

The polypeptide is BAH and coiled-coil domain-containing protein 1 (Bahcc1) (Mus musculus (Mouse)).